The chain runs to 585 residues: Zinc finger protein 614 (585 aa).

Residues 8–79 (LTLEDVAVEF…DAKIQNKNCP (72 aa)) form the KRAB domain. Residues 205 to 227 (HACIECEQTFLRKSQLIYHENIC) form a C2H2-type 1; atypical zinc finger. The segment at 257–281 (KICIPNEYRKGSTVKSSLITHQQTH) adopts a C2H2-type 2; degenerate zinc-finger fold. C2H2-type zinc fingers lie at residues 287 to 309 (YMCS…QRTH), 315 to 337 (YVCK…QRTH), 343 to 365 (YICS…QRTH), 371 to 393 (YMCS…QRSH), 399 to 421 (YICS…QRTH), 427 to 449 (YICN…QRTH), 455 to 477 (YECN…ERCH), 483 to 505 (FVCT…QRIH), 511 to 533 (YECN…QRTH), and 539 to 561 (YGCS…KKMH).

This sequence belongs to the krueppel C2H2-type zinc-finger protein family.

It is found in the nucleus. In terms of biological role, may be involved in transcriptional regulation. The polypeptide is Zinc finger protein 614 (ZNF614) (Homo sapiens (Human)).